A 558-amino-acid chain; its full sequence is Phosphatidylserine lipase ABHD16A (558 aa).

Transmembrane regions (helical) follow at residues 60–80 (ILAL…FAFF) and 93–113 (VVPF…VACL). Topologically, residues 114 to 558 (RGIGRWTNPQ…AQNFQMPWHL (445 aa)) are cytoplasmic. The 127-residue stretch at 281–407 (LVICCEGNAG…LVTRTVRQHL (127 aa)) folds into the AB hydrolase-1 domain. Residues serine 355, aspartate 430, and histidine 507 each act as charge relay system in the active site.

Belongs to the AB hydrolase superfamily. ABHD16 family.

It is found in the membrane. It catalyses the reaction 1-heptadecanoyl-2-(5Z,8Z,11Z,14Z-eicosatetraenoyl)-sn-glycero-3-phosphoserine + H2O = 1-heptadecanoyl-sn-glycero-3-phosphoserine + (5Z,8Z,11Z,14Z)-eicosatetraenoate + H(+). The enzyme catalyses 1-hexadecanoyl-2-(9Z-octadecenoyl)-sn-glycero-3-phospho-L-serine + H2O = 1-hexadecanoyl-sn-glycero-3-phospho-L-serine + (9Z)-octadecenoate + H(+). The catalysed reaction is 1-octadecanoyl-2-(9Z,12Z-octadecadienoyl)-sn-glycero-3-phosphoserine + H2O = 1-octadecanoyl-sn-glycero-3-phosphoserine + (9Z,12Z)-octadecadienoate + H(+). It carries out the reaction 1-heptadecanoyl-2-(5Z,8Z,11Z,14Z-eicosatetraenoyl)-sn-glycero-3-phosphocholine + H2O = 1-heptadecanoyl-sn-glycero-3-phosphocholine + (5Z,8Z,11Z,14Z)-eicosatetraenoate + H(+). It catalyses the reaction 1-hexadecanoyl-2-(9Z-octadecenoyl)-sn-glycero-3-phosphoglycerol + H2O = 1-hexadecanoyl-sn-glycero-3-phosphoglycerol + (9Z)-octadecenoate + H(+). The enzyme catalyses 1-hexadecanoyl-2-(9Z-octadecenoyl)-sn-glycero-3-phospho-(1D-myo-inositol) + H2O = 1-hexadecanoyl-sn-glycero-3-phospho-(1D-myo-inositol) + (9Z)-octadecenoate + H(+). The catalysed reaction is 1-heptadecanoyl-2-(5Z,8Z,11Z,14Z-eicosatetraenoyl)-sn-glycero-3-phosphoethanolamine + H2O = 1-heptadecanoyl-sn-glycero-3-phosphoethanolamine + (5Z,8Z,11Z,14Z)-eicosatetraenoate + H(+). It carries out the reaction 1-hexadecanoyl-2-(9Z-octadecenoyl)-sn-glycero-3-phospho-(1'-sn-glycerol) + H2O = 1-hexadecanoyl-sn-glycero-3-phospho-(1'-sn-glycerol) + (9Z)-octadecenoate + H(+). It catalyses the reaction Hydrolyzes glycerol monoesters of long-chain fatty acids.. The enzyme catalyses 1-tetradecanoylglycerol + H2O = tetradecanoate + glycerol + H(+). The catalysed reaction is 2-hexadecanoylglycerol + H2O = glycerol + hexadecanoate + H(+). It carries out the reaction 1-(9Z-octadecenoyl)-glycerol + H2O = glycerol + (9Z)-octadecenoate + H(+). It catalyses the reaction 2-(9Z-octadecenoyl)-glycerol + H2O = glycerol + (9Z)-octadecenoate + H(+). The enzyme catalyses 2-(9Z,12Z-octadecadienoyl)-glycerol + H2O = (9Z,12Z)-octadecadienoate + glycerol + H(+). The catalysed reaction is 1-(5Z,8Z,11Z,14Z-eicosatetraenoyl)-glycerol + H2O = glycerol + (5Z,8Z,11Z,14Z)-eicosatetraenoate + H(+). It carries out the reaction 2-(5Z,8Z,11Z,14Z-eicosatetraenoyl)-glycerol + H2O = glycerol + (5Z,8Z,11Z,14Z)-eicosatetraenoate + H(+). It catalyses the reaction prostaglandin D2-1-glycerol ester + H2O = prostaglandin D2 + glycerol + H(+). The enzyme catalyses 2-glyceryl-15-deoxy-Delta(12,14)-prostaglandin J2 + H2O = 15-deoxy-Delta(12,14)-prostaglandin J2 + glycerol + H(+). The catalysed reaction is 1-(9Z,12Z-octadecadienoyl)-glycerol + H2O = (9Z,12Z)-octadecadienoate + glycerol + H(+). Phosphatidylserine (PS) lipase that mediates the hydrolysis of phosphatidylserine to generate lysophosphatidylserine (LPS). LPS constitutes a class of signaling lipids that regulates immunological and neurological processes. Has no activity towards diacylglycerol, triacylglycerol or lysophosphatidylserine lipase. Also has monoacylglycerol lipase activity, with preference for 1-(9Z,12Z-octadecadienoyl)-glycerol (1-LG) and 2-glyceryl-15-deoxy-Delta(12,14)-prostaglandin J2 (15d-PGJ(2)-G). The sequence is that of Phosphatidylserine lipase ABHD16A from Bos taurus (Bovine).